Reading from the N-terminus, the 95-residue chain is Cerebratulus toxin A-III (95 aa).

3 disulfides stabilise this stretch: C17–C38, C23–C34, and C48–C61.

It belongs to the worm cytolysin family.

Its subcellular location is the secreted. Its function is as follows. Permeabilizes a variety of cells. Forms large pores which allows the release of large proteins almost as rapidly as small organic molecules and inorganic ions. At sublytic concentrations, the toxin also inhibits protein kinase C and endogenous voltage-gated cation selective (sodium, calcium) channels occurring in the nervous and cardiovascular systems. In Cerebratulus lacteus (Milky ribbon worm), this protein is Cerebratulus toxin A-III.